A 317-amino-acid chain; its full sequence is Flagellar hook-associated protein 3 (317 aa).

Belongs to the bacterial flagellin family.

Its subcellular location is the secreted. It localises to the bacterial flagellum. In Salmonella typhimurium (strain LT2 / SGSC1412 / ATCC 700720), this protein is Flagellar hook-associated protein 3 (flgL).